Consider the following 418-residue polypeptide: Secernin-3 (418 aa).

The propeptide occupies 1 to 5; the sequence is MEPYS. The active site involves C6. C6 carries the post-translational modification Glyoxylic acid (Cys); alternate. C6 carries the post-translational modification Pyruvic acid (Cys); alternate.

The protein belongs to the peptidase C69 family. Secernin subfamily.

Plays a role in thermal nociception. The sequence is that of Secernin-3 (Scrn3) from Mus musculus (Mouse).